The chain runs to 1483 residues: MSNTPYNSSVPSIASMTQSSVSRSPNMHTATTPGANTSSNSPPLHMSSDSSKIKRKRNRIPLSCTICRKRKVKCDKLRPHCQQCTKTGVAHLCHYMEQTWAEEAEKELLKDNELKKLRERVKSLEKTLSKVHSSPSSNSLKSYNIPESSNLFMGSDEHTTLVNANTGSASSASHMHQQQQQQQQQEQQQDFSRSANANANSSSLSISNKYDNDELDLTKDFDLLHIKSNGTIHLGATHWLSIMKGDPYLKLLWGHIFAMREKLNEWYYQKNSYSKLKSSKCPINHAQAPPSAAAAATRKCPVDHSAFSSGMVAPKEETPLPRKCPVDHTMFSSGMIPPREDTSSQKRCPVDHTMYSAGMMPPKDETPSPFSTKAMIDHNKHTMNPPQSKCPVDHRNYMKDYPSDMANSSSNPASRCPIDHSSMKNTAALPASTHNTIPHHQPQSGSHARSHPAQNRKHDSYMTESEVLATLCEMLPPKRVIALFIEKFFKHLYPAIPILDEQNFKNHMNQMLSLSSMNPTVNNFGMSMPSSSTLENQPITQINLPKLSDSCNLGILIIILRLTWLSIPSNSCEVDLGEESGSFLVPNESSNMSASALTSMAKEESLLLKHETPVEALELCQKYLIKFDELSSISNNNVNLTTVQFAIFYNFYMKSASNDLTTLTNTNNTGMANPGHDSESHQILLSNITQMAFSCGLHRDPDNFPQLNATIPATSQDVSNNGSKKANPSTNPTLNNNMSAATTNSSSRSGSADSRSGSNPVNKKENQVSIERFKHTWRKIWYYIVSMDVNQSLSLGSPRLLRNLREFSDTKLPSASRIDYVRDIKELIIVKNFTLFFQIDLCIIAVLNHILNVSLARSVRKFELDSLINLLKNLTYGTENVNDVVSSLINKGLLPTSEGGSVDSNNDEIYGLPKLTDILNHGQHNQNLYADGRNTSSSDIDKKLDLPHESTTRALFFSKHMTIRMLLYLLNYILFTHYEPMGSEDPGTNILAKEYAQEALNFAMDGYRNCMIFFNNIRNTNSLFDYMNVILSYPCLDIGHRSLQFIVCLILRAKCGPLTGMRESSIITNGTSSGFNSSVEDEDVKVKQESSDELKKDDFMKDVNLDSGDSLAEILMSRMLLFQKLTKQLSKKYNYAIRMNKSTGFFVSLLNTPSKKPDSKSGGSSFMLGNWKHPKVSNMSGFLAGDKDQLQKCPVYQDALGFVSPTGANEGSAPMQGMSLQGSTARMGGTQLPPIRSYKPITYTSSNLRRMNETGEAEAKRRRFNDGYIDNNSNNDIPRGISPKPSNGLSSVQPLLSSFSMNQLYGGTIPTVPSLTNITSQMGALPSLDRITTNQINLPDPSRDEAFDNSIKQMTPMTSAFMNANTTIPSSTLNGNMNMNGAGTANTDTSANGSALSTLTSPQGSDLASNSATQYKPDLEDFLMQNSNFNGLMINPSSLVEVVGGYNDPNNLGRNDAVDFLPVDNVEIDGLVDFYRADFPIWE.

A compositionally biased stretch (polar residues) spans 1–50 (MSNTPYNSSVPSIASMTQSSVSRSPNMHTATTPGANTSSNSPPLHMSSDS). The segment at 1-56 (MSNTPYNSSVPSIASMTQSSVSRSPNMHTATTPGANTSSNSPPLHMSSDSSKIKRK) is disordered. The Zn(2+) site is built by Cys64, Cys67, Cys74, Cys81, Cys84, and Cys93. Positions 64-93 (CTICRKRKVKCDKLRPHCQQCTKTGVAHLC) form a DNA-binding region, zn(2)-C6 fungal-type. Residues 105–134 (EKELLKDNELKKLRERVKSLEKTLSKVHSS) adopt a coiled-coil conformation. Positions 162-176 (VNANTGSASSASHMH) are enriched in polar residues. Positions 162–208 (VNANTGSASSASHMHQQQQQQQQQEQQQDFSRSANANANSSSLSISN) are disordered. Low complexity predominate over residues 177 to 208 (QQQQQQQQQEQQQDFSRSANANANSSSLSISN). The interval 244-444 (KGDPYLKLLW…NTIPHHQPQS (201 aa)) is heme-responsive; required for HMC formation. HRM repeat units follow at residues 280–285 (KCPINH), 299–304 (KCPVDH), 323–328 (KCPVDH), 347–352 (RCPVDH), 389–394 (KCPVDH), and 415–420 (RCPIDH). Polar residues-rich tracts occupy residues 432–447 (STHNTIPHHQPQSGSH) and 706–734 (QLNATIPATSQDVSNNGSKKANPSTNPTL). Disordered regions lie at residues 432 to 458 (STHNTIPHHQPQSGSHARSHPAQNRKH) and 706 to 767 (QLNA…KENQ). Over residues 735–759 (NNNMSAATTNSSSRSGSADSRSGSN) the composition is skewed to low complexity. An HRM 7 repeat occupies 1192–1197 (KCPVYQ). Disordered regions lie at residues 1266-1289 (DGYIDNNSNNDIPRGISPKPSNGL) and 1386-1411 (NTDTSANGSALSTLTSPQGSDLASNS). Residues 1388 to 1411 (DTSANGSALSTLTSPQGSDLASNS) show a composition bias toward polar residues.

In terms of assembly, binds DNA as a homodimer. Interacts with SRO9 and YDJ1. In the absence of heme, binds to at least four cellular proteins, including YDJ1 and SRO9, forming a high-molecular-weight complex (HMC) which results in repression of its activity and dictates its DNA-binding specificity.

Its subcellular location is the nucleus. Regulation of oxygen dependent gene expression. It modulates the expression of Iso-1 (CYP1) and Iso-2 (CYP3) cytochrome c. In response to heme, promotes transcription of genes encoding functions required for respiration, controlling oxidative damage and repression of anaerobic genes. Binds to the sequence 5'-CGGNNNTNNCGG-3'. This is Heme-responsive zinc finger transcription factor HAP1 (HAP1) from Saccharomyces cerevisiae (strain JAY291) (Baker's yeast).